The chain runs to 249 residues: Transcription initiation factor TFIID subunit 9B (249 aa).

Met-1 is modified (N-acetylmethionine). Position 147 is a phosphoserine (Ser-147). The tract at residues 148–171 is disordered; that stretch reads AVSSRPTTPPVAPPQAVSGPNKAA. At Thr-172 the chain carries Phosphothreonine. Ser-175 is modified (phosphoserine). Polar residues predominate over residues 224-234; that stretch reads VSSQNTATDSN. The tract at residues 224-249 is disordered; the sequence is VSSQNTATDSNPLKRKHDDDDDNDTM.

The protein belongs to the TAF9 family. Binds TAF5 and TAF6. Component of TFIID and the TATA-binding protein-free TAF complex (TFTC). TFIID is composed of TATA binding protein (TBP) and a number of TBP-associated factors (TAFs). Binds N-terminal domain of p53/TP53 which is essential for transcription.

It is found in the nucleus. Functionally, essential for cell viability. TAF9 and TAF9B are involved in transcriptional activation as well as repression of distinct but overlapping sets of genes. May have a role in gene regulation associated with apoptosis. TAFs are components of the transcription factor IID (TFIID) complex, the TBP-free TAFII complex (TFTC), the PCAF histone acetylase complex and the STAGA transcription coactivator-HAT complex. TFIID or TFTC are essential for the regulation of RNA polymerase II-mediated transcription. The polypeptide is Transcription initiation factor TFIID subunit 9B (Taf9b) (Mus musculus (Mouse)).